Consider the following 757-residue polypeptide: 5-methyltetrahydropteroyltriglutamate--homocysteine methyltransferase (757 aa).

5-methyltetrahydropteroyltri-L-glutamate is bound by residues 17–20 and Lys117; that span reads RELK. L-homocysteine contacts are provided by residues 434 to 436 and Glu487; that span reads IGS. Residues 434-436 and Glu487 contribute to the L-methionine site; that span reads IGS. 5-methyltetrahydropteroyltri-L-glutamate-binding positions include 518 to 519 and Trp564; that span reads RC. L-homocysteine is bound at residue Asp602. An L-methionine-binding site is contributed by Asp602. Glu608 provides a ligand contact to 5-methyltetrahydropteroyltri-L-glutamate. Zn(2+) is bound by residues His644, Cys646, and Glu668. His697 functions as the Proton donor in the catalytic mechanism. Cys729 is a Zn(2+) binding site.

Belongs to the vitamin-B12 independent methionine synthase family. It depends on Zn(2+) as a cofactor.

The catalysed reaction is 5-methyltetrahydropteroyltri-L-glutamate + L-homocysteine = tetrahydropteroyltri-L-glutamate + L-methionine. The protein operates within amino-acid biosynthesis; L-methionine biosynthesis via de novo pathway; L-methionine from L-homocysteine (MetE route): step 1/1. Its function is as follows. Catalyzes the transfer of a methyl group from 5-methyltetrahydrofolate to homocysteine resulting in methionine formation. In Proteus mirabilis (strain HI4320), this protein is 5-methyltetrahydropteroyltriglutamate--homocysteine methyltransferase.